The sequence spans 1700 residues: Balbiani ring protein 3 (1700 aa).

The N-terminal stretch at 1–20 (MKTLSSLLLVLAVNVLLIQA) is a signal peptide.

Salivary gland.

Its subcellular location is the secreted. Functionally, used by the larvae to construct a supramolecular structure, the larval tube. Balbiani ring protein 3 could play a role as a transport protein that binds to other proteins intracellularly and in the gland lumen in order to prevent these from forming water-insoluble fibers too early. This chain is Balbiani ring protein 3 (BR3), found in Chironomus tentans (Midge).